The primary structure comprises 208 residues: Na(+)-translocating NADH-quinone reductase subunit D (208 aa).

Transmembrane regions (helical) follow at residues 42–62 (FVMA…VSLI), 72–92 (IIVQ…ILKA), 103–123 (VFVG…AFAM), 131–151 (FVDG…VAFF), and 178–198 (NGLF…IWGL).

The protein belongs to the NqrDE/RnfAE family. As to quaternary structure, composed of six subunits; NqrA, NqrB, NqrC, NqrD, NqrE and NqrF.

The protein resides in the cell inner membrane. The catalysed reaction is a ubiquinone + n Na(+)(in) + NADH + H(+) = a ubiquinol + n Na(+)(out) + NAD(+). Functionally, NQR complex catalyzes the reduction of ubiquinone-1 to ubiquinol by two successive reactions, coupled with the transport of Na(+) ions from the cytoplasm to the periplasm. NqrA to NqrE are probably involved in the second step, the conversion of ubisemiquinone to ubiquinol. The chain is Na(+)-translocating NADH-quinone reductase subunit D from Haemophilus influenzae (strain 86-028NP).